A 138-amino-acid chain; its full sequence is Acidic phospholipase A2 Cvv-E6e (138 aa).

Positions 1 to 16 (MRTLWILAVLLLGVEG) are cleaved as a signal peptide. Intrachain disulfides connect Cys-42/Cys-131, Cys-44/Cys-60, Cys-59/Cys-111, Cys-65/Cys-138, Cys-66/Cys-104, Cys-73/Cys-97, and Cys-91/Cys-102. Tyr-43, Gly-45, and Gly-47 together coordinate Ca(2+). The active site involves His-63. Asp-64 lines the Ca(2+) pocket. Residue Asp-105 is part of the active site.

Ca(2+) is required as a cofactor. As to expression, expressed by the venom gland.

The protein localises to the secreted. It catalyses the reaction a 1,2-diacyl-sn-glycero-3-phosphocholine + H2O = a 1-acyl-sn-glycero-3-phosphocholine + a fatty acid + H(+). In terms of biological role, snake venom phospholipase A2 (PLA2) that significantly inhibits ADP-induced platelet aggregation in platelet-rich plasma of human, rabbit and guinea pig. PLA2 catalyzes the calcium-dependent hydrolysis of the 2-acyl groups in 3-sn-phosphoglycerides. The protein is Acidic phospholipase A2 Cvv-E6e of Crotalus viridis viridis (Prairie rattlesnake).